The primary structure comprises 72 residues: METQKLISMVKEALEKYQYPLTAKNIKVVIQKEHNVILPTGSINSILYSNSELFEKIDKTNTIYPPLWIRKN.

The protein belongs to the asfivirus I73R family.

Its subcellular location is the virion. This is an uncharacterized protein from African swine fever virus (isolate Warthog/Namibia/Wart80/1980) (ASFV).